The following is a 209-amino-acid chain: MSIEKQVAEQLLEIKAVFLKPNEPFTWASGIKSPIYCDNRLTLGFPKVRQFIAKSLAEKIKQTFGEVDVVAGTATAGIPHAAWVSDLLDLPMVYVRSKAKEHGKGNQIEGPISKGQKVVVIEDLISTGGSSLKAVEALEEAGAEVVGIAAIFTYGLAKGKQLLEESGTKLVTLTNYDELIEVALNENYVTGEDMETLKEWKKNPENWGK.

Residues Arg96, Lys100, His102, and 122–130 (EDLISTGGS) each bind 5-phospho-alpha-D-ribose 1-diphosphate. Residue Ser126 participates in orotate binding.

The protein belongs to the purine/pyrimidine phosphoribosyltransferase family. PyrE subfamily. As to quaternary structure, homodimer. It depends on Mg(2+) as a cofactor.

It catalyses the reaction orotidine 5'-phosphate + diphosphate = orotate + 5-phospho-alpha-D-ribose 1-diphosphate. It functions in the pathway pyrimidine metabolism; UMP biosynthesis via de novo pathway; UMP from orotate: step 1/2. Its function is as follows. Catalyzes the transfer of a ribosyl phosphate group from 5-phosphoribose 1-diphosphate to orotate, leading to the formation of orotidine monophosphate (OMP). This chain is Orotate phosphoribosyltransferase, found in Listeria monocytogenes serotype 4b (strain F2365).